The primary structure comprises 223 residues: Cytidylate kinase (223 aa).

17–25 provides a ligand contact to ATP; it reads GPTASGKGT.

This sequence belongs to the cytidylate kinase family. Type 1 subfamily.

It is found in the cytoplasm. It catalyses the reaction CMP + ATP = CDP + ADP. The catalysed reaction is dCMP + ATP = dCDP + ADP. This is Cytidylate kinase from Bordetella pertussis (strain Tohama I / ATCC BAA-589 / NCTC 13251).